The chain runs to 635 residues: Biosynthetic arginine decarboxylase (635 aa).

K103 is modified (N6-(pyridoxal phosphate)lysine). F283–Y293 contributes to the substrate binding site.

It belongs to the Orn/Lys/Arg decarboxylase class-II family. SpeA subfamily. Mg(2+) is required as a cofactor. The cofactor is pyridoxal 5'-phosphate.

It carries out the reaction L-arginine + H(+) = agmatine + CO2. It functions in the pathway amine and polyamine biosynthesis; agmatine biosynthesis; agmatine from L-arginine: step 1/1. Its function is as follows. Catalyzes the biosynthesis of agmatine from arginine. In Proteus mirabilis (strain HI4320), this protein is Biosynthetic arginine decarboxylase.